Reading from the N-terminus, the 871-residue chain is DNA mismatch repair protein MutS (871 aa).

618-625 (GPNMSGKS) contributes to the ATP binding site.

The protein belongs to the DNA mismatch repair MutS family.

This protein is involved in the repair of mismatches in DNA. It is possible that it carries out the mismatch recognition step. This protein has a weak ATPase activity. The sequence is that of DNA mismatch repair protein MutS from Christiangramia forsetii (strain DSM 17595 / CGMCC 1.15422 / KT0803) (Gramella forsetii).